Reading from the N-terminus, the 280-residue chain is MDVYFFVMEITSFLKLLSQTDGFGFGIFVIGCSSQFFNLVFLCCLLLLGLKFLSFKGTSLFLQYLEKINRISPNIEFFNSFNREHKDCNNNNNNNNNNNGFISKSHLADGLDQKKPIILHWSSDSTNRLSWENCDLLLLRDGLDHIQNRENTVALSETELDEKNHHGEEEESEDEEESQSQNDEDQLLDVITLRTMVKRERKRGDYMKKELEKERRAAESAAEEAMAMLLKLRMEKSVVEMETKQYKRVAEQKQVYDQEVIQSLQWMLMKLDDDEDKIQM.

Residues 22–42 (GFGFGIFVIGCSSQFFNLVFL) form a helical membrane-spanning segment. The segment at 153 to 187 (VALSETELDEKNHHGEEEESEDEEESQSQNDEDQL) is disordered. A compositionally biased stretch (acidic residues) spans 169 to 187 (EEESEDEEESQSQNDEDQL). A GTD-binding domain is found at 188-280 (LDVITLRTMV…LDDDEDKIQM (93 aa)).

Its subcellular location is the membrane. This Arabidopsis thaliana (Mouse-ear cress) protein is Protein FLOURY 1-like.